The primary structure comprises 354 residues: DNA polymerase IV (354 aa).

In terms of domain architecture, UmuC spans 8–189; sequence IIHIDMDCFY…LPLQKIPGVG (182 aa). Mg(2+) is bound by residues Asp12 and Asp107. The active site involves Glu108.

The protein belongs to the DNA polymerase type-Y family. Monomer. Requires Mg(2+) as cofactor.

The protein resides in the cytoplasm. It catalyses the reaction DNA(n) + a 2'-deoxyribonucleoside 5'-triphosphate = DNA(n+1) + diphosphate. In terms of biological role, poorly processive, error-prone DNA polymerase involved in untargeted mutagenesis. Copies undamaged DNA at stalled replication forks, which arise in vivo from mismatched or misaligned primer ends. These misaligned primers can be extended by PolIV. Exhibits no 3'-5' exonuclease (proofreading) activity. May be involved in translesional synthesis, in conjunction with the beta clamp from PolIII. The chain is DNA polymerase IV from Vibrio vulnificus (strain CMCP6).